Reading from the N-terminus, the 755-residue chain is Diamine oxidase [copper-containing] (755 aa).

An N-terminal signal peptide occupies residues 1–24 (MGRGTLALGWAGAALLLLQMLAAA). Asn115 carries N-linked (GlcNAc...) asparagine glycosylation. Residues Cys182 and Cys186 are joined by a disulfide bond. The Proton acceptor role is filled by Asp376. Cys394 and Cys420 are oxidised to a cystine. Catalysis depends on Tyr464, which acts as the Schiff-base intermediate with substrate; via topaquinone. Residue Tyr464 is modified to 2',4',5'-topaquinone. Residues His513 and His515 each coordinate Cu(2+). 3 residues coordinate Ca(2+): Asp522, Leu523, and Asp524. Asn541 carries N-linked (GlcNAc...) asparagine glycosylation. 6 residues coordinate Ca(2+): Glu565, Phe656, Asn659, Glu661, Asp667, and Leu668. His678 provides a ligand contact to Cu(2+). Asn749 carries an N-linked (GlcNAc...) asparagine glycan.

It belongs to the copper/topaquinone oxidase family. In terms of assembly, homodimer; disulfide-linked. The cofactor is Cu(2+). Ca(2+) serves as cofactor. It depends on L-topaquinone as a cofactor. Post-translationally, topaquinone (TPQ) is generated by copper-dependent autoxidation of a specific tyrosyl residue. N-glycosylated; the glycans are primarily linear, di-, or tribranched fucosylated complex type.

Its subcellular location is the secreted. It is found in the extracellular space. The protein localises to the cell membrane. The enzyme catalyses histamine + O2 + H2O = imidazole-4-acetaldehyde + H2O2 + NH4(+). It catalyses the reaction N(tau)-methylhistamine + O2 + H2O = 1-methylimidazole-4-acetaldehyde + H2O2 + NH4(+). It carries out the reaction putrescine + O2 + H2O = 4-aminobutanal + H2O2 + NH4(+). The catalysed reaction is cadaverine + O2 + H2O = 5-aminopentanal + H2O2 + NH4(+). Inhibited by amiloride and amiloride analogs. In terms of biological role, catalyzes the oxidative deamination of primary amines to the corresponding aldehydes with the concomitant production of hydrogen peroxide and ammonia. Its preferred substrates in vitro are the diamines histamine and 1-methylhistamine and it could therefore play a role in allergic and immune responses. Has a broad specificity for diamines and can also act on cadaverine and putrescine, two products of amino acid catabolism. It could also act on polyamines, like spermidine and spermine though less efficiently, and regulate various biological processes. In Sus scrofa (Pig), this protein is Diamine oxidase [copper-containing].